A 1235-amino-acid polypeptide reads, in one-letter code: ATP-dependent helicase/nuclease subunit A (1235 aa).

A UvrD-like helicase ATP-binding domain is found at 12-482; it reads SLWTDDQWKA…IDLSQNFRSR (471 aa). 33–40 contributes to the ATP binding site; it reads AAAGSGKT. The 292-residue stretch at 509–800 folds into the UvrD-like helicase C-terminal domain; that stretch reads AAELTLGANF…RMMTIHASKG (292 aa).

The protein belongs to the helicase family. AddA subfamily. In terms of assembly, heterodimer of AddA and AddB/RexB. The cofactor is Mg(2+).

It catalyses the reaction Couples ATP hydrolysis with the unwinding of duplex DNA by translocating in the 3'-5' direction.. The catalysed reaction is ATP + H2O = ADP + phosphate + H(+). Its function is as follows. The heterodimer acts as both an ATP-dependent DNA helicase and an ATP-dependent, dual-direction single-stranded exonuclease. Recognizes the chi site generating a DNA molecule suitable for the initiation of homologous recombination. The AddA nuclease domain is required for chi fragment generation; this subunit has the helicase and 3' -&gt; 5' nuclease activities. This chain is ATP-dependent helicase/nuclease subunit A, found in Listeria monocytogenes serovar 1/2a (strain ATCC BAA-679 / EGD-e).